A 146-amino-acid chain; its full sequence is UPF0178 protein BCE33L2782 (146 aa).

Belongs to the UPF0178 family.

In Bacillus cereus (strain ZK / E33L), this protein is UPF0178 protein BCE33L2782.